Reading from the N-terminus, the 834-residue chain is ATP-dependent 6-phosphofructokinase (834 aa).

The tract at residues 1 to 426 (MTTTSKIIND…FYEIFIACSN (426 aa)) is N-terminal catalytic PFK domain 1. Residues Gly62, 123-124 (RS), and 153-156 (GDGS) each bind ATP. Mg(2+) is bound at residue Asp154. Residues 199–201 (SID), Arg236, 243–245 (MGR), Glu299, Arg326, and 332–335 (HVQR) contribute to the substrate site. The active-site Proton acceptor is Asp201. An interdomain linker region spans residues 427 to 437 (LHRRKVESKGM). Positions 438-834 (GVLILHSGGP…DPNVNPQFTL (397 aa)) are C-terminal regulatory PFK domain 2. Beta-D-fructose 2,6-bisphosphate-binding positions include Arg507, 566–570 (TIANN), Arg603, 610–612 (MGA), Glu666, Arg692, 698–701 (HLQQ), and Arg764. The tract at residues 799–834 (SNLSEQDRPIKKSDISSPTSYSQKTFDPNVNPQFTL) is disordered. The segment covering 803–812 (EQDRPIKKSD) has biased composition (basic and acidic residues). Residues 813–834 (ISSPTSYSQKTFDPNVNPQFTL) are compositionally biased toward polar residues.

Belongs to the phosphofructokinase type A (PFKA) family. ATP-dependent PFK group I subfamily. Eukaryotic two domain clade 'E' sub-subfamily. As to quaternary structure, homotetramer. Mg(2+) serves as cofactor. Post-translationally, the N-terminus is blocked.

The protein localises to the cytoplasm. The enzyme catalyses beta-D-fructose 6-phosphate + ATP = beta-D-fructose 1,6-bisphosphate + ADP + H(+). The protein operates within carbohydrate degradation; glycolysis; D-glyceraldehyde 3-phosphate and glycerone phosphate from D-glucose: step 3/4. Its activity is regulated as follows. Allosterically activated by ADP, AMP, or fructose 2,6-bisphosphate, and allosterically inhibited by ATP or citrate. Catalyzes the phosphorylation of D-fructose 6-phosphate to fructose 1,6-bisphosphate by ATP, the first committing step of glycolysis. The sequence is that of ATP-dependent 6-phosphofructokinase (pfkA) from Dictyostelium discoideum (Social amoeba).